Reading from the N-terminus, the 186-residue chain is Transposon Tn21 resolvase (186 aa).

The region spanning 4–137 (QRIGYIRVST…EGIALAKQRG (134 aa)) is the Resolvase/invertase-type recombinase catalytic domain. The O-(5'-phospho-DNA)-serine intermediate role is filled by S12. Residues 164 to 183 (KTKLAREFGISRETLYQYLR) constitute a DNA-binding region (H-T-H motif).

The protein belongs to the site-specific recombinase resolvase family.

Functionally, resolvase catalyzes the resolution (a site-specific recombination) of the cointegrated replicon to yield the final transposition products. The chain is Transposon Tn21 resolvase (tnpR) from Escherichia coli.